A 446-amino-acid chain; its full sequence is Exodeoxyribonuclease 7 large subunit (446 aa).

It belongs to the XseA family. In terms of assembly, heterooligomer composed of large and small subunits.

The protein resides in the cytoplasm. The enzyme catalyses Exonucleolytic cleavage in either 5'- to 3'- or 3'- to 5'-direction to yield nucleoside 5'-phosphates.. Bidirectionally degrades single-stranded DNA into large acid-insoluble oligonucleotides, which are then degraded further into small acid-soluble oligonucleotides. The polypeptide is Exodeoxyribonuclease 7 large subunit (Streptococcus pneumoniae (strain ATCC BAA-255 / R6)).